Reading from the N-terminus, the 203-residue chain is Small ribosomal subunit protein uS4 (203 aa).

Residues 93 to 173 (RRFDNVVFRS…IPSWIQVDKA (81 aa)) form the S4 RNA-binding domain.

This sequence belongs to the universal ribosomal protein uS4 family. As to quaternary structure, part of the 30S ribosomal subunit. Contacts protein S5. The interaction surface between S4 and S5 is involved in control of translational fidelity.

One of the primary rRNA binding proteins, it binds directly to 16S rRNA where it nucleates assembly of the body of the 30S subunit. Its function is as follows. With S5 and S12 plays an important role in translational accuracy. The protein is Small ribosomal subunit protein uS4 of Chlorobium phaeobacteroides (strain DSM 266 / SMG 266 / 2430).